The chain runs to 177 residues: Large ribosomal subunit protein uL6 (177 aa).

It belongs to the universal ribosomal protein uL6 family. As to quaternary structure, part of the 50S ribosomal subunit.

This protein binds to the 23S rRNA, and is important in its secondary structure. It is located near the subunit interface in the base of the L7/L12 stalk, and near the tRNA binding site of the peptidyltransferase center. The chain is Large ribosomal subunit protein uL6 from Methylorubrum populi (strain ATCC BAA-705 / NCIMB 13946 / BJ001) (Methylobacterium populi).